The following is a 330-amino-acid chain: ATP-dependent Clp protease proteolytic subunit-related protein 3, chloroplastic (330 aa).

Residues 1–43 (MASCLQASMNSLLPRSSSFSPHPPLSSNSSGRRNLKTFRYAFR) constitute a chloroplast transit peptide. The disordered stretch occupies residues 7-32 (ASMNSLLPRSSSFSPHPPLSSNSSGR). A compositionally biased stretch (low complexity) spans 8–30 (SMNSLLPRSSSFSPHPPLSSNSS).

The protein belongs to the peptidase S14 family. As to quaternary structure, component of the chloroplastic Clp protease core complex which consist of at least 16 proteins: CLPP4 (3 copies), CLPP5 (3 copies), CLPR4 (2 copies), ClpP1 (1 copy), CLPP6 (1 copy), CLPR2 (1 copy), CLPT1 (1 copy), CLPT2 (1 copy) and 3 copies of CLPP3 and/or CLPR1 and/or CLPR3. The core complex is organized in two heptameric rings, one containing CLPP3,4,5,6 in a 1:2:3:1 ratio and the other CLPP1 and CLPR1,2,3,4 in a 3:1:1:1:1 ratio.

The protein localises to the plastid. Its subcellular location is the chloroplast. The protein is ATP-dependent Clp protease proteolytic subunit-related protein 3, chloroplastic of Arabidopsis thaliana (Mouse-ear cress).